The sequence spans 938 residues: Inner tegument protein (938 aa).

The interval 457–938 (EIVDLLFSST…LVEPLLLKLG (482 aa)) is interaction with large tegument protein.

Belongs to the herpesviridae inner tegument protein family. In terms of assembly, interacts (via C-terminus) with the large tegument protein/LTP (via N-terminus).

The protein resides in the virion tegument. Its subcellular location is the host cytoplasm. It is found in the host nucleus. It localises to the host Golgi apparatus. The protein localises to the host trans-Golgi network. Its function is as follows. Plays an essential role in cytoplasmic secondary envelopment during viral egress. Interacts with the capsid via the large tegument protein/LTP and participates in its transport to the host trans-Golgi network (TGN) where secondary envelopment occurs. Modulates tegumentation and capsid accumulation at the viral assembly complex. This Human herpesvirus 7 (strain JI) (HHV-7) protein is Inner tegument protein (U30).